The chain runs to 250 residues: Ribonuclease PH (250 aa).

Phosphate-binding positions include Arg86 and 124–126 (GTR).

This sequence belongs to the RNase PH family. In terms of assembly, homohexameric ring arranged as a trimer of dimers.

The enzyme catalyses tRNA(n+1) + phosphate = tRNA(n) + a ribonucleoside 5'-diphosphate. Its function is as follows. Phosphorolytic 3'-5' exoribonuclease that plays an important role in tRNA 3'-end maturation. Removes nucleotide residues following the 3'-CCA terminus of tRNAs; can also add nucleotides to the ends of RNA molecules by using nucleoside diphosphates as substrates, but this may not be physiologically important. Probably plays a role in initiation of 16S rRNA degradation (leading to ribosome degradation) during starvation. The polypeptide is Ribonuclease PH (Shouchella clausii (strain KSM-K16) (Alkalihalobacillus clausii)).